We begin with the raw amino-acid sequence, 344 residues long: UDP-N-acetylenolpyruvoylglucosamine reductase (344 aa).

Positions 17–187 (VDYACSELIS…TGVGIKLAKK (171 aa)) constitute an FAD-binding PCMH-type domain. The active site involves Arg-163. Ser-233 acts as the Proton donor in catalysis. Glu-329 is a catalytic residue.

This sequence belongs to the MurB family. The cofactor is FAD.

It localises to the cytoplasm. It catalyses the reaction UDP-N-acetyl-alpha-D-muramate + NADP(+) = UDP-N-acetyl-3-O-(1-carboxyvinyl)-alpha-D-glucosamine + NADPH + H(+). It functions in the pathway cell wall biogenesis; peptidoglycan biosynthesis. Functionally, cell wall formation. The sequence is that of UDP-N-acetylenolpyruvoylglucosamine reductase from Shewanella sediminis (strain HAW-EB3).